Consider the following 448-residue polypeptide: Bifunctional protein GlmU (448 aa).

The pyrophosphorylase stretch occupies residues 1–232 (MSERSLLVVV…VDEVAGVNSR (232 aa)). UDP-N-acetyl-alpha-D-glucosamine-binding positions include 11–14 (LAAG), Lys-25, Gln-78, and 83–84 (GT). Residue Asp-108 participates in Mg(2+) binding. The UDP-N-acetyl-alpha-D-glucosamine site is built by Gly-144, Glu-158, Asn-173, and Asn-230. Asn-230 is a binding site for Mg(2+). Positions 233–253 (LQLAEAEAILQGRLRRAAMAG) are linker. The N-acetyltransferase stretch occupies residues 254-448 (GATLVAPETV…LRAARGKPKV (195 aa)). UDP-N-acetyl-alpha-D-glucosamine is bound by residues Arg-319 and Lys-337. Residue His-349 is the Proton acceptor of the active site. UDP-N-acetyl-alpha-D-glucosamine-binding residues include Tyr-352 and Asn-363. Residues Ala-366, 372-373 (NY), Ser-409, and Arg-426 each bind acetyl-CoA.

The protein in the N-terminal section; belongs to the N-acetylglucosamine-1-phosphate uridyltransferase family. It in the C-terminal section; belongs to the transferase hexapeptide repeat family. In terms of assembly, homotrimer. Requires Mg(2+) as cofactor.

Its subcellular location is the cytoplasm. The enzyme catalyses alpha-D-glucosamine 1-phosphate + acetyl-CoA = N-acetyl-alpha-D-glucosamine 1-phosphate + CoA + H(+). The catalysed reaction is N-acetyl-alpha-D-glucosamine 1-phosphate + UTP + H(+) = UDP-N-acetyl-alpha-D-glucosamine + diphosphate. It functions in the pathway nucleotide-sugar biosynthesis; UDP-N-acetyl-alpha-D-glucosamine biosynthesis; N-acetyl-alpha-D-glucosamine 1-phosphate from alpha-D-glucosamine 6-phosphate (route II): step 2/2. Its pathway is nucleotide-sugar biosynthesis; UDP-N-acetyl-alpha-D-glucosamine biosynthesis; UDP-N-acetyl-alpha-D-glucosamine from N-acetyl-alpha-D-glucosamine 1-phosphate: step 1/1. It participates in bacterial outer membrane biogenesis; LPS lipid A biosynthesis. Catalyzes the last two sequential reactions in the de novo biosynthetic pathway for UDP-N-acetylglucosamine (UDP-GlcNAc). The C-terminal domain catalyzes the transfer of acetyl group from acetyl coenzyme A to glucosamine-1-phosphate (GlcN-1-P) to produce N-acetylglucosamine-1-phosphate (GlcNAc-1-P), which is converted into UDP-GlcNAc by the transfer of uridine 5-monophosphate (from uridine 5-triphosphate), a reaction catalyzed by the N-terminal domain. The chain is Bifunctional protein GlmU from Azorhizobium caulinodans (strain ATCC 43989 / DSM 5975 / JCM 20966 / LMG 6465 / NBRC 14845 / NCIMB 13405 / ORS 571).